The primary structure comprises 277 residues: MEMO1 family protein Tpet_0837 (277 aa).

Belongs to the MEMO1 family.

The protein is MEMO1 family protein Tpet_0837 of Thermotoga petrophila (strain ATCC BAA-488 / DSM 13995 / JCM 10881 / RKU-1).